Here is a 197-residue protein sequence, read N- to C-terminus: dCTP deaminase, dUMP-forming (197 aa).

Residues 105–110 (RSSIGR), Asp-123, 131–133 (TLE), Gln-152, Tyr-166, Lys-174, and Gln-178 contribute to the dCTP site. The Proton donor/acceptor role is filled by Glu-133. The interval 161-183 (PAERPYGHPSRDSKYIGQTRPQT) is disordered. Residues 165 to 174 (PYGHPSRDSK) are compositionally biased toward basic and acidic residues.

Belongs to the dCTP deaminase family. Homotrimer.

It catalyses the reaction dCTP + 2 H2O = dUMP + NH4(+) + diphosphate. It participates in pyrimidine metabolism; dUMP biosynthesis; dUMP from dCTP: step 1/1. Bifunctional enzyme that catalyzes both the deamination of dCTP to dUTP and the hydrolysis of dUTP to dUMP without releasing the toxic dUTP intermediate. The sequence is that of dCTP deaminase, dUMP-forming from Methanothermobacter thermautotrophicus (strain ATCC 29096 / DSM 1053 / JCM 10044 / NBRC 100330 / Delta H) (Methanobacterium thermoautotrophicum).